An 831-amino-acid polypeptide reads, in one-letter code: Periplasmic nitrate reductase (831 aa).

The segment at residues 1 to 29 (MTVTRRDFVRHQALATAAAAAGVAVPAAA) is a signal peptide (tat-type signal). In terms of domain architecture, 4Fe-4S Mo/W bis-MGD-type spans 41–97 (LVWSKAPCRFCGTGCSVNVATKEGRVVATHGDIKSPVNRGLNCVKGYFLSKVMYGED). Positions 48, 51, 55, and 83 each coordinate [4Fe-4S] cluster. Mo-bis(molybdopterin guanine dinucleotide) is bound by residues Lys85, Gln152, Asn177, Cys181, 214-221 (WGSNMAEM), 245-249 (STYEH), 264-266 (QSD), Met375, Gln379, Asn485, 511-512 (SD), Lys534, Asp561, and 721-730 (TGRVIEHWHS). Substrate is bound at residue Trp797. Mo-bis(molybdopterin guanine dinucleotide) is bound by residues Asn805 and Lys822.

It belongs to the prokaryotic molybdopterin-containing oxidoreductase family. NasA/NapA/NarB subfamily. In terms of assembly, component of the periplasmic nitrate reductase NapAB complex composed of NapA and NapB. [4Fe-4S] cluster is required as a cofactor. It depends on Mo-bis(molybdopterin guanine dinucleotide) as a cofactor. In terms of processing, predicted to be exported by the Tat system. The position of the signal peptide cleavage has not been experimentally proven.

It localises to the periplasm. The catalysed reaction is 2 Fe(II)-[cytochrome] + nitrate + 2 H(+) = 2 Fe(III)-[cytochrome] + nitrite + H2O. Its function is as follows. Catalytic subunit of the periplasmic nitrate reductase complex NapAB. Receives electrons from NapB and catalyzes the reduction of nitrate to nitrite. The sequence is that of Periplasmic nitrate reductase from Saccharophagus degradans (strain 2-40 / ATCC 43961 / DSM 17024).